The chain runs to 312 residues: Beta-ketoacyl-[acyl-carrier-protein] synthase III (312 aa).

Catalysis depends on residues Cys112 and His237. Residues 238 to 242 are ACP-binding; the sequence is QANIR. Residue Asn267 is part of the active site.

The protein belongs to the thiolase-like superfamily. FabH family. As to quaternary structure, homodimer.

The protein localises to the cytoplasm. The catalysed reaction is malonyl-[ACP] + acetyl-CoA + H(+) = 3-oxobutanoyl-[ACP] + CO2 + CoA. Its pathway is lipid metabolism; fatty acid biosynthesis. Its function is as follows. Catalyzes the condensation reaction of fatty acid synthesis by the addition to an acyl acceptor of two carbons from malonyl-ACP. Catalyzes the first condensation reaction which initiates fatty acid synthesis and may therefore play a role in governing the total rate of fatty acid production. Possesses both acetoacetyl-ACP synthase and acetyl transacylase activities. Its substrate specificity determines the biosynthesis of branched-chain and/or straight-chain of fatty acids. This is Beta-ketoacyl-[acyl-carrier-protein] synthase III from Bacillus pumilus (strain SAFR-032).